The following is a 71-amino-acid chain: 26S proteasome complex subunit rpn15 (71 aa).

Residues 1 to 38 (MSRAALPSLENLEDDDEFEDFATENWPMKDTELDTGDD) are disordered. Residues 11-22 (NLEDDDEFEDFA) show a composition bias toward acidic residues. A UBS-II region spans residues 16 to 25 (DEFEDFATEN). The tract at residues 38-49 (DTLWENNWDDED) is UBS-I.

Belongs to the DSS1/SEM1 family. Interacts with mlo3, rae1, nup98/nup189 and nup146. Interacts with rad24. Interacts (via UBSs) with ubiquitin (ubi3/ubi5).

Its subcellular location is the cytoplasm. The protein localises to the nucleus. In terms of biological role, versatile protein that might stabilize multiple protein complexes involved in diverse pathways. Subunit of the 26S proteasome which plays a role in ubiquitin-dependent proteolysis. Acts as a ubiquitin receptor of the 26S proteasome, by interacting with ubiquitin chains linked by 'Lys-63' and 'Lys-48'. Involved in nuclear export of specific sets of mRNAs. Links the mRNA adapter mlo3 to rae1 for targeting mRNA-protein complex to the proteins of the nucleoporin complex (NPC). Involved in recombinational repair of DNA. Plays a critical role in linking repair and checkpoint factors to damaged DNA sites by specifically recruiting rad24 and cdc25 to the DSBs. This is 26S proteasome complex subunit rpn15 (rpn15) from Schizosaccharomyces pombe (strain 972 / ATCC 24843) (Fission yeast).